A 490-amino-acid chain; its full sequence is MVGVGPKRPPSRKGSMSDVPQNLLEHIKHFEEIFTVDTATLKKIVDHFVNELTKGLSVEGGNIPMNVTWVLGFPDGKETGTFLALDMGGTNLRVCEITLTEEKGGFDIIQSKYRMPEELKTGEAEELWQYIVDCVEQFIQFHHENENLSKLPLGFTFSYPATQDYIDHGVLQRWTKGFDIDGVEGKDVVPPLEKVFKERGLPIKVAALINDTTGTLIASSYTDPAMKIGCIFGTGVNAAYMENAGSIPKLAHMNLPPDMPVAINCEYGAFDNEHIVLPLTKYDHIIDRDSPRPGQQAFEKMTAGLYLGEIFRLALVDILDTQPGLIFKDQDTSQLRIPYLLDSSFPAAIEEDPYENLIETAELVQNMLKIKATRSELELMRRLAELIGTRAARLSACGVAAICKKKNIESCHVGADGSVFTKYPHFKARGAQALREILDWAPSEKDKVTIHAAEDGSGVGAALIAALTLKRVKAGNTAGIRDAQAMLAMC.

Residues 21–466 (QNLLEHIKHF…SGVGAALIAA (446 aa)) form the Hexokinase domain. The tract at residues 75–209 (DGKETGTFLA…GLPIKVAALI (135 aa)) is hexokinase small subdomain. The tract at residues 210–455 (NDTTGTLIAS…DKVTIHAAED (246 aa)) is hexokinase large subdomain.

Belongs to the hexokinase family. As to quaternary structure, monomer.

The enzyme catalyses a D-hexose + ATP = a D-hexose 6-phosphate + ADP + H(+). It carries out the reaction D-fructose + ATP = D-fructose 6-phosphate + ADP + H(+). It catalyses the reaction D-glucose + ATP = D-glucose 6-phosphate + ADP + H(+). It functions in the pathway carbohydrate metabolism; hexose metabolism. The protein operates within carbohydrate degradation; glycolysis; D-glyceraldehyde 3-phosphate and glycerone phosphate from D-glucose: step 1/4. Catalyzes the phosphorylation of hexose, such as D-glucose and D-fructose, to hexose 6-phosphate (D-glucose 6-phosphate and D-fructose 6-phosphate, respectively). Mediates the initial step of glycolysis by catalyzing phosphorylation of D-glucose to D-glucose 6-phosphate. The chain is Hexokinase (hxkA) from Emericella nidulans (strain FGSC A4 / ATCC 38163 / CBS 112.46 / NRRL 194 / M139) (Aspergillus nidulans).